A 592-amino-acid polypeptide reads, in one-letter code: Actin-binding protein (592 aa).

Position 2 is an N-acetylalanine (A2). Residues 7–136 form the ADF-H domain; the sequence is DYTTHSREID…DENELLMKIS (130 aa). A compositionally biased stretch (polar residues) spans 144 to 155; it reads SIQTSSKQQGKA. The interval 144 to 541 is disordered; sequence SIQTSSKQQG…KENPWATAEY (398 aa). T165 carries the phosphothreonine modification. Phosphoserine is present on residues S167 and S169. T181 bears the Phosphothreonine mark. S183 carries the phosphoserine modification. Copy 1 of the repeat occupies 200–209; that stretch reads DDDWNEPELK. Positions 200 to 575 are 3 X 10 AA approximate repeats (acidic); that stretch reads DDDWNEPELK…DDDWWLGELE (376 aa). 2 stretches are compositionally biased toward basic and acidic residues: residues 237 to 248 and 270 to 279; these read IAEEKAKEDPRL and NESKLKRDSE. Over residues 280–296 the composition is skewed to polar residues; that stretch reads FNSFLGTTKPPSMTESS. A compositionally biased stretch (basic and acidic residues) spans 297–312; sequence LKNDDDKVIKGFRNEK. S313 bears the Phosphoserine mark. Basic and acidic residues-rich tracts occupy residues 332–341 and 350–359; these read TKAEAPKPEV and PDVKDLKSKF. 2 positions are modified to phosphoserine: S365 and S389. A compositionally biased stretch (basic and acidic residues) spans 398 to 414; it reads EPVKAEEAEQPKTDYKK. Residues 427–446 are compositionally biased toward acidic residues; the sequence is DNEEEPEENDDDWDDDEDEA. Repeat 2 spans residues 436–445; that stretch reads DDDWDDDEDE. Phosphoserine is present on S458. K464 is covalently cross-linked (Glycyl lysine isopeptide (Lys-Gly) (interchain with G-Cter in ubiquitin)). The residue at position 481 (S481) is a Phosphoserine. Residues 490 to 505 are compositionally biased toward acidic residues; sequence APEQAPEEEIEEEAEE. Residues 506–516 are compositionally biased toward low complexity; that stretch reads AAPQLPSRSSA. The 61-residue stretch at 532-592 folds into the SH3 domain; sequence KENPWATAEY…FPSNYVSLGN (61 aa). Repeat 3 spans residues 566–575; the sequence is DDDWWLGELE.

It belongs to the ABP1 family. As to quaternary structure, binds F-actin, but not G-actin. Interacts with the ARP2/3 complex. Interacts with APP1, ARK1, PRK1, SCP1, SRV2 and YIR003W via its SH3 domain. Interacts with the SH3 domain of RVS167 and with SLA1. In terms of processing, the actin depolymerizing factor homology (ADF) domain mediates actin filament binding.

The protein resides in the cytoplasm. Its subcellular location is the cytoskeleton. The protein localises to the actin patch. In terms of biological role, regulates ARP2/3 complex-mediated actin assembly. Recruits ARP2/3 complex to sides of preexisting actin filaments, which may promote nucleation or stabilization of filament branches. Binds to actin filaments, but not actin monomers. Actin binding is required for ARP2/3 complex activation. May also have a role in linking the actin cytoskeleton to endocytosis. recruits components of the endocytotic machinery to cortical actin patches, known sites of endocytosis. This Saccharomyces cerevisiae (strain ATCC 204508 / S288c) (Baker's yeast) protein is Actin-binding protein (ABP1).